We begin with the raw amino-acid sequence, 156 residues long: Protein-export protein SecB (156 aa).

It belongs to the SecB family. Homotetramer, a dimer of dimers. One homotetramer interacts with 1 SecA dimer.

It localises to the cytoplasm. One of the proteins required for the normal export of preproteins out of the cell cytoplasm. It is a molecular chaperone that binds to a subset of precursor proteins, maintaining them in a translocation-competent state. It also specifically binds to its receptor SecA. The polypeptide is Protein-export protein SecB (Paraburkholderia xenovorans (strain LB400)).